Here is a 210-residue protein sequence, read N- to C-terminus: Uracil phosphoribosyltransferase (210 aa).

5-phospho-alpha-D-ribose 1-diphosphate is bound by residues Arg78, Arg103, and 130 to 138 (DPMLATGGS). Residues Ile193 and 198-200 (GDA) contribute to the uracil site. Residue Asp199 coordinates 5-phospho-alpha-D-ribose 1-diphosphate.

This sequence belongs to the UPRTase family. The cofactor is Mg(2+).

The catalysed reaction is UMP + diphosphate = 5-phospho-alpha-D-ribose 1-diphosphate + uracil. It functions in the pathway pyrimidine metabolism; UMP biosynthesis via salvage pathway; UMP from uracil: step 1/1. Its activity is regulated as follows. Allosterically activated by GTP. Functionally, catalyzes the conversion of uracil and 5-phospho-alpha-D-ribose 1-diphosphate (PRPP) to UMP and diphosphate. The protein is Uracil phosphoribosyltransferase of Chromobacterium violaceum (strain ATCC 12472 / DSM 30191 / JCM 1249 / CCUG 213 / NBRC 12614 / NCIMB 9131 / NCTC 9757 / MK).